The following is a 156-amino-acid chain: Ribosomal RNA large subunit methyltransferase H (156 aa).

Residues L73, G104, and 123 to 128 (LSDLTL) each bind S-adenosyl-L-methionine.

It belongs to the RNA methyltransferase RlmH family. In terms of assembly, homodimer.

Its subcellular location is the cytoplasm. The enzyme catalyses pseudouridine(1915) in 23S rRNA + S-adenosyl-L-methionine = N(3)-methylpseudouridine(1915) in 23S rRNA + S-adenosyl-L-homocysteine + H(+). Its function is as follows. Specifically methylates the pseudouridine at position 1915 (m3Psi1915) in 23S rRNA. The protein is Ribosomal RNA large subunit methyltransferase H of Leptothrix cholodnii (strain ATCC 51168 / LMG 8142 / SP-6) (Leptothrix discophora (strain SP-6)).